The chain runs to 353 residues: FNMESDSFEDLWKGEDFSNYSYSSDLPPSLPDVAPCRPESLEINKYFVVIIYALVFLLSLLGNSLVMLVILYSRVGRSVTDVYLLNLALADLLFALTLPIWAASKVNGWIFGTFLCKVVSLLKEVNFYSGILLLACISVDRYLAIVHATRTLTQKRYLVKFICLSIWGLSLLLALPVLLFRRTVYSSNVSPACYEDMGNNTANWRMLLRILPQSFGFIVPLLIMLFCYGFTLRTLFKAHMGQKHRAMRVIFAVVLIFLLCWLPYSLVLLADTLMRTQVIQETCERRNHIDRALDATEILGILHSCLNPLIYAFIGQKFRHGLLKILAIHGLISKDSLPKDSRPSFVGSSSGHT.

At 1-45 the chain is on the extracellular side; the sequence is FNMESDSFEDLWKGEDFSNYSYSSDLPPSLPDVAPCRPESLEINK. N19 is a glycosylation site (N-linked (GlcNAc...) asparagine). Residues 46–72 form a helical membrane-spanning segment; the sequence is YFVVIIYALVFLLSLLGNSLVMLVILY. Over 73-81 the chain is Cytoplasmic; it reads SRVGRSVTD. Residues 82–102 form a helical membrane-spanning segment; that stretch reads VYLLNLALADLLFALTLPIWA. The Extracellular portion of the chain corresponds to 103–117; that stretch reads ASKVNGWIFGTFLCK. Residues C116 and C193 are joined by a disulfide bond. The chain crosses the membrane as a helical span at residues 118–139; it reads VVSLLKEVNFYSGILLLACISV. Residues 140–160 are Cytoplasmic-facing; sequence DRYLAIVHATRTLTQKRYLVK. Residues 161–180 traverse the membrane as a helical segment; it reads FICLSIWGLSLLLALPVLLF. The Extracellular segment spans residues 181-205; sequence RRTVYSSNVSPACYEDMGNNTANWR. A helical membrane pass occupies residues 206-228; sequence MLLRILPQSFGFIVPLLIMLFCY. The Cytoplasmic segment spans residues 229–248; sequence GFTLRTLFKAHMGQKHRAMR. A helical transmembrane segment spans residues 249–270; that stretch reads VIFAVVLIFLLCWLPYSLVLLA. At 271 to 291 the chain is on the extracellular side; sequence DTLMRTQVIQETCERRNHIDR. Residues 292-312 form a helical membrane-spanning segment; the sequence is ALDATEILGILHSCLNPLIYA. Topologically, residues 313–353 are cytoplasmic; it reads FIGQKFRHGLLKILAIHGLISKDSLPKDSRPSFVGSSSGHT.

This sequence belongs to the G-protein coupled receptor 1 family. As to quaternary structure, interacts with IL8. Interacts with GNAI2. Phosphorylated upon ligand binding; which is required for desensitization.

The protein resides in the cell membrane. In terms of biological role, receptor for interleukin-8 which is a powerful neutrophil chemotactic factor. Binding of IL-8 to the receptor causes activation of neutrophils. This response is mediated via a G-protein that activates a phosphatidylinositol-calcium second messenger system. Binds to IL-8 with high affinity. Also binds with high affinity to CXCL3, GRO/MGSA and NAP-2. The polypeptide is C-X-C chemokine receptor type 2 (CXCR2) (Macaca mulatta (Rhesus macaque)).